The chain runs to 356 residues: Carbohydrate sulfotransferase 10 (356 aa).

Over 1–6 the chain is Cytoplasmic; sequence MHHQWL. Residues 7–27 traverse the membrane as a helical; Signal-anchor for type II membrane protein segment; it reads LLAACFWVIFMFMVASKFITL. Residues 28–356 lie on the Lumenal side of the membrane; that stretch reads TFKDPDGYSA…GYQKPDFLLN (329 aa). A glycan (N-linked (GlcNAc...) asparagine) is linked at Asn99. Residues 127-133 and 189-197 each bind 3'-phosphoadenylyl sulfate; these read PKVGNTQ and RDPFERLIS. Residues Asn228 and Asn316 are each glycosylated (N-linked (GlcNAc...) asparagine).

This sequence belongs to the sulfotransferase 2 family. As to expression, in myogenic progenitors, it is ubiquitously expressed.

The protein localises to the golgi apparatus membrane. It carries out the reaction 3-O-{beta-D-GlcA-(1-&gt;[3)-alpha-D-Xyl-(1-&gt;3)-beta-D-GlcA-(1-&gt;](n)-4)-beta-D-Xyl-(1-&gt;4)-Rib-ol-P-Rib-ol-P-3-beta-D-GalNAc-(1-&gt;3)-beta-D-GlcNAc-(1-&gt;4)-O-6-P-alpha-D-Man}-L-Thr-[protein] + 3'-phosphoadenylyl sulfate = 3-O-{O-3-S-beta-D-GlcA-(1-&gt;[3)-alpha-D-Xyl-(1-&gt;3)-beta-D-GlcA-(1-&gt;](n)-4)-beta-D-Xyl-(1-&gt;4)-Rib-ol-P-Rib-ol-P-3-beta-D-GalNAc-(1-&gt;3)-beta-D-GlcNAc-(1-&gt;4)-O-6-P-alpha-D-Man}-L-Thr-[protein] + adenosine 3',5'-bisphosphate + H(+). It catalyses the reaction 17beta-estradiol 3-O-(beta-D-glucuronate) + 3'-phosphoadenylyl sulfate = 17beta-estradiol 3-O-(3-sulfo-beta-D-glucuronate) + adenosine 3',5'-bisphosphate + H(+). The catalysed reaction is 17beta-estradiol 3-O-(beta-D-glucuronate) 17-sulfate + 3'-phosphoadenylyl sulfate = 17beta-estradiol 3-O-(3-sulfo-beta-D-glucuronate) 17-sulfate + adenosine 3',5'-bisphosphate + H(+). The enzyme catalyses 17beta-estradiol 17-O-(beta-D-glucuronate) + 3'-phosphoadenylyl sulfate = 17beta-estradiol 17-O-(3-sulfo-beta-D-glucuronate) + adenosine 3',5'-bisphosphate + H(+). It carries out the reaction 16alpha,17beta-estriol 3-O-(beta-D-glucuronate) + 3'-phosphoadenylyl sulfate = 16alpha,17beta-estriol 3-O-(3-sulfo-beta-D-glucuronate) + adenosine 3',5'-bisphosphate + H(+). It catalyses the reaction 16alpha,17beta-estriol 16-O-(beta-D-glucuronate) + 3'-phosphoadenylyl sulfate = 16alpha,17beta-estriol 16-O-(3-sulfo-beta-D-glucuronate) + adenosine 3',5'-bisphosphate + H(+). The catalysed reaction is 16alpha,17beta-estriol 17-O-(beta-D-glucuronate) + 3'-phosphoadenylyl sulfate = 16alpha,17beta-estriol 17-O-(3-sulfo-beta-D-glucuronate) + adenosine 3',5'-bisphosphate + H(+). The enzyme catalyses estrone 3-O-(beta-D-glucuronate) + 3'-phosphoadenylyl sulfate = estrone 3-O-(3-sulfo-beta-D-glucuronate) + adenosine 3',5'-bisphosphate + H(+). It carries out the reaction 3alpha,20alpha-dihydroxy-5beta-pregnane 3-O-(beta-D-glucuronate) + 3'-phosphoadenylyl sulfate = 3alpha,20alpha-dihydroxy-5beta-pregnane 3-O-(3-sulfo-beta-D-glucuronate) + adenosine 3',5'-bisphosphate + H(+). It catalyses the reaction testosterone 17-O-(beta-D-glucuronate) + 3'-phosphoadenylyl sulfate = testosterone 17-O-(3-sulfo-beta-D-glucuronate) + adenosine 3',5'-bisphosphate + H(+). The catalysed reaction is 3beta-androst-5-en-17-one 3-O-(beta-D-glucuronate) + 3'-phosphoadenylyl sulfate = 3beta-androst-5-en-17-one 3-O-(3-sulfo-beta-D-glucuronate) + adenosine 3',5'-bisphosphate + H(+). The enzyme catalyses 3alpha,17alpha-dihydroxy-5beta-androstane-11-one-17beta-carboxylate 3-O-(beta-D-glucuronate) + 3'-phosphoadenylyl sulfate = 3alpha,17alpha-dihydroxy-5beta-androstane-11-one-17beta-carboxylate 3-O-(3-sulfo-beta-D-glucuronate) + adenosine 3',5'-bisphosphate + H(+). It carries out the reaction 3alpha-hydroxyetiocholan-17-one 3-O-(beta-D-glucuronate) + 3'-phosphoadenylyl sulfate = 3alpha-hydroxyetiocholan-17-one 3-O-(3-sulfo-beta-D-glucuronate) + adenosine 3',5'-bisphosphate + H(+). It participates in steroid metabolism. It functions in the pathway protein modification; carbohydrate sulfation. In terms of biological role, catalyzes the transfer of sulfate from 3'-phosphoadenylyl sulfate (PAPS) to position 3 of terminal glucuronic acid of both protein- and lipid-linked oligosaccharides. Participates in biosynthesis of HNK-1 carbohydrate structure 3-O-sulfo-beta-D-GlcA-(1-&gt;3)-beta-D-Gal-(1-&gt;4)-D-GlcNAc-R, a sulfated glucuronyl-lactosaminyl residue carried by many neural recognition molecules, which is involved in cell interactions during ontogenetic development and in synaptic plasticity in the adult. May be indirectly involved in synapse plasticity of the hippocampus, via its role in HNK-1 biosynthesis. Sulfates terminal glucuronyl residue of the laminin globular (LG)-domain binding epitope on DAG1/alpha-dystroglycan and prevents further polymerization by LARGE1 glycosyltransferase. Likely defines the chain length of LG epitope, conferring binding specificity to extracellular matrix components. Plays a role in down-regulating the steroid hormones. Sulfates glucuronidated estrogens and androgens with an impact in hormone cycle and fertility. Has a preference for glucuronyl moiety at the 3-hydroxyl group of a sterol ring rather than the 17-hydroxyl group, showing high catalytic efficiency for 17beta-estradiol 3-O-(beta-D-glucuronate) and dehydroepiandrosterone 3-O-(beta-D-glucuronate) hormones. In Rattus norvegicus (Rat), this protein is Carbohydrate sulfotransferase 10 (Chst10).